The following is a 295-amino-acid chain: Bis(5'-nucleosyl)-tetraphosphatase, symmetrical (295 aa).

A disordered region spans residues 271-295; the sequence is LSIEHPRHTHTPRRKAKKRHKRSPK. The segment covering 277–295 has biased composition (basic residues); the sequence is RHTHTPRRKAKKRHKRSPK.

The protein belongs to the Ap4A hydrolase family.

The catalysed reaction is P(1),P(4)-bis(5'-adenosyl) tetraphosphate + H2O = 2 ADP + 2 H(+). In terms of biological role, hydrolyzes diadenosine 5',5'''-P1,P4-tetraphosphate to yield ADP. The chain is Bis(5'-nucleosyl)-tetraphosphatase, symmetrical from Xylella fastidiosa (strain M23).